Reading from the N-terminus, the 165-residue chain is Small ribosomal subunit protein uS5 (165 aa).

The S5 DRBM domain occupies L10–V73.

It belongs to the universal ribosomal protein uS5 family. Part of the 30S ribosomal subunit. Contacts proteins S4 and S8.

In terms of biological role, with S4 and S12 plays an important role in translational accuracy. Functionally, located at the back of the 30S subunit body where it stabilizes the conformation of the head with respect to the body. The chain is Small ribosomal subunit protein uS5 from Acinetobacter baylyi (strain ATCC 33305 / BD413 / ADP1).